The sequence spans 144 residues: Large ribosomal subunit protein uL11 (144 aa).

Belongs to the universal ribosomal protein uL11 family. In terms of assembly, part of the ribosomal stalk of the 50S ribosomal subunit. Interacts with L10 and the large rRNA to form the base of the stalk. L10 forms an elongated spine to which L12 dimers bind in a sequential fashion forming a multimeric L10(L12)X complex. In terms of processing, one or more lysine residues are methylated.

Functionally, forms part of the ribosomal stalk which helps the ribosome interact with GTP-bound translation factors. In Marinomonas sp. (strain MWYL1), this protein is Large ribosomal subunit protein uL11.